Here is a 364-residue protein sequence, read N- to C-terminus: Chorismate synthase (364 aa).

Residue Arg-48 participates in NADP(+) binding. Residues 126–128 (RSS), Gly-288, 303–307 (KPIAS), and Arg-329 contribute to the FMN site.

Belongs to the chorismate synthase family. Homotetramer. It depends on FMNH2 as a cofactor.

The enzyme catalyses 5-O-(1-carboxyvinyl)-3-phosphoshikimate = chorismate + phosphate. It functions in the pathway metabolic intermediate biosynthesis; chorismate biosynthesis; chorismate from D-erythrose 4-phosphate and phosphoenolpyruvate: step 7/7. Functionally, catalyzes the anti-1,4-elimination of the C-3 phosphate and the C-6 proR hydrogen from 5-enolpyruvylshikimate-3-phosphate (EPSP) to yield chorismate, which is the branch point compound that serves as the starting substrate for the three terminal pathways of aromatic amino acid biosynthesis. This reaction introduces a second double bond into the aromatic ring system. This is Chorismate synthase from Desulfovibrio desulfuricans (strain ATCC 27774 / DSM 6949 / MB).